A 59-amino-acid polypeptide reads, in one-letter code: Large ribosomal subunit protein eL29 (59 aa).

The segment covering 1–26 (MAKSKNHTAHNQTRKAHRNGIKKPKT) has biased composition (basic residues). A disordered region spans residues 1 to 37 (MAKSKNHTAHNQTRKAHRNGIKKPKTYKYPSLKGVDP). Lysine 52 participates in a covalent cross-link: Glycyl lysine isopeptide (Lys-Gly) (interchain with G-Cter in ubiquitin).

Belongs to the eukaryotic ribosomal protein eL29 family. Component of the large ribosomal subunit (LSU). Mature yeast ribosomes consist of a small (40S) and a large (60S) subunit. The 40S small subunit contains 1 molecule of ribosomal RNA (18S rRNA) and 33 different proteins (encoded by 57 genes). The large 60S subunit contains 3 rRNA molecules (25S, 5.8S and 5S rRNA) and 46 different proteins (encoded by 81 genes).

It is found in the cytoplasm. In terms of biological role, component of the ribosome, a large ribonucleoprotein complex responsible for the synthesis of proteins in the cell. The small ribosomal subunit (SSU) binds messenger RNAs (mRNAs) and translates the encoded message by selecting cognate aminoacyl-transfer RNA (tRNA) molecules. The large subunit (LSU) contains the ribosomal catalytic site termed the peptidyl transferase center (PTC), which catalyzes the formation of peptide bonds, thereby polymerizing the amino acids delivered by tRNAs into a polypeptide chain. The nascent polypeptides leave the ribosome through a tunnel in the LSU and interact with protein factors that function in enzymatic processing, targeting, and the membrane insertion of nascent chains at the exit of the ribosomal tunnel. This Saccharomyces cerevisiae (strain ATCC 204508 / S288c) (Baker's yeast) protein is Large ribosomal subunit protein eL29.